The chain runs to 352 residues: Fe-S cluster assembly protein DRE2 (352 aa).

Residues 1–11 show a composition bias toward polar residues; sequence MAPTAVYTQKD. The disordered stretch occupies residues 1 to 24; the sequence is MAPTAVYTQKDSPSSSQPSSKGPA. Residues 1–196 form an N-terminal SAM-like domain region; sequence MAPTAVYTQK…TVTSAPSVPL (196 aa). Residues 196 to 237 are linker; sequence LLLRKRGDPAKKKALWALTTDASASPSTKIDADALLTAEDKA. The [2Fe-2S] cluster site is built by cysteine 243, cysteine 257, cysteine 260, and cysteine 262. Positions 243-262 are fe-S binding site A; that stretch reads CAPVDRSAPRRKKACKNCSC. 4 residues coordinate [4Fe-4S] cluster: cysteine 315, cysteine 318, cysteine 326, and cysteine 329. 2 consecutive short sequence motifs (cx2C motif) follow at residues 315-318 and 326-329; these read CGSC and CAGC. The segment at 315–329 is fe-S binding site B; that stretch reads CGSCFLGDAFRCAGC.

Belongs to the anamorsin family. Monomer. Interacts with TAH18. Interacts with MIA40. [2Fe-2S] cluster is required as a cofactor. It depends on [4Fe-4S] cluster as a cofactor.

The protein resides in the cytoplasm. Its subcellular location is the mitochondrion intermembrane space. Functionally, component of the cytosolic iron-sulfur (Fe-S) protein assembly (CIA) machinery required for the maturation of extramitochondrial Fe-S proteins. Part of an electron transfer chain functioning in an early step of cytosolic Fe-S biogenesis, facilitating the de novo assembly of a [4Fe-4S] cluster on the scaffold complex CFD1-NBP35. Electrons are transferred to DRE2 from NADPH via the FAD- and FMN-containing protein TAH18. TAH18-DRE2 are also required for the assembly of the diferric tyrosyl radical cofactor of ribonucleotide reductase (RNR), probably by providing electrons for reduction during radical cofactor maturation in the catalytic small subunit RNR2. This Coprinopsis cinerea (strain Okayama-7 / 130 / ATCC MYA-4618 / FGSC 9003) (Inky cap fungus) protein is Fe-S cluster assembly protein DRE2.